The sequence spans 460 residues: Ammonium transporter Rh type B-A (460 aa).

Residues 1-10 (MTGYSTNMRI) are Cytoplasmic-facing. The helical transmembrane segment at 11–31 (KLPLFCLILQFITIILFAVFV) threads the bilayer. The Extracellular portion of the chain corresponds to 32 to 62 (RYDHESDARGWHDELKNHSTANADNDFYFRY). Asn48 carries N-linked (GlcNAc...) asparagine glycosylation. Residues 63–83 (PSFQDVHVMIFIGFGFLMTFL) form a helical membrane-spanning segment. Over 84-87 (KRYG) the chain is Cytoplasmic. A helical transmembrane segment spans residues 88–108 (FSSVAFNFLIAAFGLQWSTLI). At 109 to 125 (QGFFHGFHDGKIHVGIE) the chain is on the extracellular side. The chain crosses the membrane as a helical span at residues 126-146 (SMINADFCTGAVLISFGAVLG). At 147-150 (KTSP) the chain is on the cytoplasmic side. The helical transmembrane segment at 151–171 (VQLIVMTLIEVTLFGINEYII) threads the bilayer. Residues 172-179 (LNIVGAKD) are Extracellular-facing. Residues 180–202 (AGGSMTIHTFGAYFGLIVSRVLY) form a helical membrane-spanning segment. Residues 203–220 (RADLDKSRQREGSVYHSD) are Cytoplasmic-facing. The helical transmembrane segment at 221 to 241 (LFAMIGTIYLWMFWPSFNSAV) threads the bilayer. Residues 242-252 (TAHGDDQHRTV) lie on the Extracellular side of the membrane. A helical transmembrane segment spans residues 253–273 (LNTYYSLAACTLATFGFSALL). The Cytoplasmic segment spans residues 274–283 (NGEGKLDMVH). Residues 284 to 304 (IQNAALAGGVAVGTSGEMMLT) form a helical membrane-spanning segment. Residue Pro305 is a topological domain, extracellular. A helical transmembrane segment spans residues 306–326 (FGAMIAGTLAGIVSVLGYKYL). Residues 327–347 (TPVLDSKLKIQDTCGVHNLHG) lie on the Cytoplasmic side of the membrane. Residues 348–368 (MPGILGAVIGAIVALFATADI) form a helical membrane-spanning segment. At 369–394 (YGDGMDDVFPMIFDGSRTAKQQSLYQ) the chain is on the extracellular side. Residues 395–415 (FLALLVALGFAIVGGTVVGFI) traverse the membrane as a helical segment. Over 416–460 (LKLPLFGTPSDAECFEDAVYWEVPGGEGHQQLTVVVNNEDPDTQA) the chain is Cytoplasmic.

Belongs to the ammonium transporter (TC 2.A.49) family. Rh subfamily.

The protein resides in the basolateral cell membrane. It is found in the cytoplasmic vesicle membrane. Functions as a specific ammonium transporter. The chain is Ammonium transporter Rh type B-A (rhbg-a) from Xenopus laevis (African clawed frog).